A 412-amino-acid polypeptide reads, in one-letter code: uncharacterized protein (412 aa).

Residue histidine 49 coordinates Zn(2+). The Proton acceptor role is filled by glutamate 52. Zn(2+)-binding residues include histidine 53 and glutamate 129.

The protein belongs to the peptidase M16 family. Zn(2+) is required as a cofactor.

This is an uncharacterized protein from Rickettsia felis (strain ATCC VR-1525 / URRWXCal2) (Rickettsia azadi).